The following is a 405-amino-acid chain: Acetylornithine aminotransferase 2 (405 aa).

Pyridoxal 5'-phosphate is bound by residues Gly-105–Thr-106 and Phe-138. Arg-141 contributes to the N(2)-acetyl-L-ornithine binding site. Asp-224–Gln-227 is a binding site for pyridoxal 5'-phosphate. Residue Lys-254 is modified to N6-(pyridoxal phosphate)lysine. Ser-282 is a binding site for N(2)-acetyl-L-ornithine. Thr-283 provides a ligand contact to pyridoxal 5'-phosphate.

Belongs to the class-III pyridoxal-phosphate-dependent aminotransferase family. ArgD subfamily. As to quaternary structure, homodimer. Pyridoxal 5'-phosphate serves as cofactor.

The protein localises to the cytoplasm. The catalysed reaction is N(2)-acetyl-L-ornithine + 2-oxoglutarate = N-acetyl-L-glutamate 5-semialdehyde + L-glutamate. It functions in the pathway amino-acid biosynthesis; L-arginine biosynthesis; N(2)-acetyl-L-ornithine from L-glutamate: step 4/4. The chain is Acetylornithine aminotransferase 2 from Caulobacter vibrioides (strain ATCC 19089 / CIP 103742 / CB 15) (Caulobacter crescentus).